The primary structure comprises 285 residues: D-apionate oxidoisomerase (285 aa).

Residues 15–17 (GKM), E36, and D71 each bind NAD(+). 2 residues coordinate Zn(2+): H116 and E186.

This sequence belongs to the ApnO family. Zn(2+) is required as a cofactor.

The catalysed reaction is D-apionate + NAD(+) = 3-oxoisoapionate + NADH + H(+). It participates in carbohydrate metabolism. Its function is as follows. Involved in catabolism of D-apiose. Catalyzes the conversion of D-apionate to 3-oxo-isoapionate. In Pectobacterium atrosepticum (strain SCRI 1043 / ATCC BAA-672) (Erwinia carotovora subsp. atroseptica), this protein is D-apionate oxidoisomerase.